A 316-amino-acid chain; its full sequence is MVKKTAGLLVMAYGTPYREDDIERYYTHIRHGRKPPQEQIEDLKARYRAIGGLSPLAKITEEQAKRLEERLNEVQDEVEFRMYLGLKHIEPFIEDAVERMHDDGIKEAVGIVLAPHYSTFSIRSYNERAKAAAKKLGGPTIYTIDQWYDEPKFLQYWAEQVRAIFAAMPERERERAVLIVSAHSLPEKIIQAGDPYPTQLEDTAKRIADQAGVAHYAVGWQSAGQTPEPWLGPDVQDLTRQLYEERGYTSFVYAPVGFVADHLEVLYDNDIECKQVTEEIGARYYRPEMPNTNPLFIDALASVVLKRWAEEGDRHE.

Residues Tyr13, Arg30, 46–47 (RY), Ser54, and Tyr125 each bind Fe-coproporphyrin III. Fe(2+) contacts are provided by His183 and Glu264.

It belongs to the ferrochelatase family.

The protein localises to the cytoplasm. It carries out the reaction Fe-coproporphyrin III + 2 H(+) = coproporphyrin III + Fe(2+). The protein operates within porphyrin-containing compound metabolism; protoheme biosynthesis. Functionally, involved in coproporphyrin-dependent heme b biosynthesis. Catalyzes the insertion of ferrous iron into coproporphyrin III to form Fe-coproporphyrin III. The protein is Coproporphyrin III ferrochelatase of Geobacillus kaustophilus (strain HTA426).